The chain runs to 160 residues: Large ribosomal subunit protein eL29 (160 aa).

A compositionally biased stretch (basic residues) spans 1–26 (MAKSKNHTTHNQSRKWHRNGIKKPRS). The disordered stretch occupies residues 1 to 32 (MAKSKNHTTHNQSRKWHRNGIKKPRSQRYESL). Lysine 5 bears the N6-methyllysine mark. A Phosphoserine modification is found at serine 31. The residue at position 33 (lysine 33) is an N6-acetyllysine. Residues 119–160 (CRPKSQAKAQSKAKATAGGTAAAPVPPASAPKGAQAPTKAPQ) are disordered. Low complexity predominate over residues 121 to 141 (PKSQAKAQSKAKATAGGTAAA).

This sequence belongs to the eukaryotic ribosomal protein eL29 family. As to quaternary structure, component of the large ribosomal subunit.

Its subcellular location is the cytoplasm. Functionally, component of the large ribosomal subunit. The ribosome is a large ribonucleoprotein complex responsible for the synthesis of proteins in the cell. The protein is Large ribosomal subunit protein eL29 (RPL29) of Sus scrofa (Pig).